The chain runs to 435 residues: uncharacterized protein (435 aa).

3 WD repeats span residues 105-149, 164-204, and 207-247; these read DLEY…GIDS, HNNA…SKTQ, and AHDK…HSTI. S266 is modified (phosphoserine). Residues 313 to 353 form a WD 4 repeat; it reads GHKGDVNAVKWMPGSKSKLATCGDDCVVSLWDLDQPVNPSP. The disordered stretch occupies residues 352–371; that stretch reads SPAPTLSVSGTTPGMTGSTS. Residues 358 to 371 show a composition bias toward low complexity; it reads SVSGTTPGMTGSTS. S388 carries the post-translational modification Phosphoserine.

It localises to the cytoplasm. The protein localises to the golgi apparatus. This is an uncharacterized protein from Schizosaccharomyces pombe (strain 972 / ATCC 24843) (Fission yeast).